We begin with the raw amino-acid sequence, 372 residues long: METLWTLLYLLEPAPATLIVTAVTVTFASAFRALNYGKEMERNRDFSEASITLDSSQALMIPVMSSCSLLLMFYLFSSVSQLLTAFTAIASVSSLFYWLSPYAVYMKTQLGLSDPFLSRCCSKSFTRIQGLLLVACAMTVVAWLISGHWVLNNLLGISICIAFVSHVRLPNIKICAMLLVCLFVYDIFWVFFSERFFGANVMVAVATQQASNPVHTVANSLNLPGLQLITKKLELPVKIVFPRNLLGGVVPGVSASDFMMLGLGDMAIPAMLLALVLCFDHRKTRDVVNIFDLKSSKGHKYIWYALPGYAIGLVAALAAGVLTHSPQPALLYLVPSTLGPVIFMSWRRKDLAELWEGPALSNPIEKSHEIEI.

Over 1–6 the chain is Lumenal; the sequence is METLWT. Residues 7–27 form a helical membrane-spanning segment; the sequence is LLYLLEPAPATLIVTAVTVTF. Residues 28–54 are Cytoplasmic-facing; the sequence is ASAFRALNYGKEMERNRDFSEASITLD. A helical membrane pass occupies residues 55-77; that stretch reads SSQALMIPVMSSCSLLLMFYLFS. Residues 78-81 are Lumenal-facing; the sequence is SVSQ. Residues 82 to 104 form a helical membrane-spanning segment; the sequence is LLTAFTAIASVSSLFYWLSPYAV. Residues 105-123 are Cytoplasmic-facing; sequence YMKTQLGLSDPFLSRCCSK. The chain crosses the membrane as a helical span at residues 124–146; that stretch reads SFTRIQGLLLVACAMTVVAWLIS. Residues 147–149 lie on the Lumenal side of the membrane; the sequence is GHW. Residues 150-167 traverse the membrane as a helical segment; sequence VLNNLLGISICIAFVSHV. Residues 168–171 lie on the Cytoplasmic side of the membrane; that stretch reads RLPN. Residues 172–192 form a helical membrane-spanning segment; it reads IKICAMLLVCLFVYDIFWVFF. Residue Asp186 is part of the active site. Topologically, residues 193 to 257 are lumenal; it reads SERFFGANVM…GVVPGVSASD (65 aa). The chain crosses the membrane as a helical span at residues 258–278; that stretch reads FMMLGLGDMAIPAMLLALVLC. The active site involves Asp265. Topologically, residues 279-301 are cytoplasmic; the sequence is FDHRKTRDVVNIFDLKSSKGHKY. A helical transmembrane segment spans residues 302–322; that stretch reads IWYALPGYAIGLVAALAAGVL. Residues 323–325 are Lumenal-facing; that stretch reads THS. A helical membrane pass occupies residues 326–346; sequence PQPALLYLVPSTLGPVIFMSW. The PAL signature appears at 328-330; that stretch reads PAL. The Cytoplasmic portion of the chain corresponds to 347–372; sequence RRKDLAELWEGPALSNPIEKSHEIEI.

The protein belongs to the peptidase A22B family. Ubiquitous.

It localises to the endosome membrane. Functionally, intramembrane-cleaving aspartic protease (I-CLiP) that cleaves type II membrane signal peptides in the hydrophobic plane of the membrane. The sequence is that of Signal peptide peptidase-like 1 (SPPL1) from Arabidopsis thaliana (Mouse-ear cress).